A 533-amino-acid chain; its full sequence is Calcium/calmodulin-dependent protein kinase type II subunit delta (533 aa).

At Ala-2 the chain carries N-acetylalanine. In terms of domain architecture, Protein kinase spans 14–272; sequence YQLFEELGKG…ASEALKHPWI (259 aa). Residues 20-28 and Lys-43 contribute to the ATP site; that span reads LGKGAFSVV. The active-site Proton acceptor is the Asp-136. Residues 283–292 are autoinhibitory domain; that stretch reads HRQETVDCLK. Thr-287 is subject to Phosphothreonine; by autocatalysis. Residues 291–301 form a calmodulin-binding region; the sequence is LKKFNARRKLK. A phosphothreonine; by autocatalysis mark is found at Thr-306 and Thr-307. Ser-315 is subject to Phosphoserine. Lys-318 is subject to N6-acetyllysine. Ser-319 and Ser-364 each carry phosphoserine. Positions 337–375 are disordered; the sequence is TSPKENIPTPALEPQTTVIHNPDGNKESTESSNTTIEDE. Thr-365 is subject to Phosphothreonine. The residue at position 367 (Ser-367) is a Phosphoserine. Thr-370 and Thr-371 each carry phosphothreonine. Residues Ser-438, Ser-524, and Ser-528 each carry the phosphoserine modification.

It belongs to the protein kinase superfamily. CAMK Ser/Thr protein kinase family. CaMK subfamily. In terms of assembly, CAMK2 is composed of 4 different chains: alpha (CAMK2A), beta (CAMK2B), gamma (CAMK2G), and delta (CAMK2D). The different isoforms assemble into homo- or heteromultimeric holoenzymes composed of 12 subunits with two hexameric rings stacked one on top of the other. Interacts with RRAD and CACNB2. Autophosphorylation of Thr-287 following activation by Ca(2+)/calmodulin. Phosphorylation of Thr-287 locks the kinase into an activated state. As to expression, expressed in liver.

The protein resides in the cell membrane. Its subcellular location is the sarcolemma. It is found in the sarcoplasmic reticulum membrane. It carries out the reaction L-seryl-[protein] + ATP = O-phospho-L-seryl-[protein] + ADP + H(+). The enzyme catalyses L-threonyl-[protein] + ATP = O-phospho-L-threonyl-[protein] + ADP + H(+). With respect to regulation, activated by Ca(2+)/calmodulin. Binding of calmodulin results in conformational change that relieves intrasteric autoinhibition and allows autophosphorylation of Thr-287 which turns the kinase in a constitutively active form and confers to the kinase a Ca(2+)-independent activity. Its function is as follows. Calcium/calmodulin-dependent protein kinase involved in the regulation of Ca(2+) homeostatis and excitation-contraction coupling (ECC) in heart by targeting ion channels, transporters and accessory proteins involved in Ca(2+) influx into the myocyte, Ca(2+) release from the sarcoplasmic reticulum (SR), SR Ca(2+) uptake and Na(+) and K(+) channel transport. Targets also transcription factors and signaling molecules to regulate heart function. In its activated form, is involved in the pathogenesis of dilated cardiomyopathy and heart failure. Contributes to cardiac decompensation and heart failure by regulating SR Ca(2+) release via direct phosphorylation of RYR2 Ca(2+) channel on 'Ser-2808'. In the nucleus, phosphorylates the MEF2 repressor HDAC4, promoting its nuclear export and binding to 14-3-3 protein, and expression of MEF2 and genes involved in the hypertrophic program. Is essential for left ventricular remodeling responses to myocardial infarction. In pathological myocardial remodeling acts downstream of the beta adrenergic receptor signaling cascade to regulate key proteins involved in ECC. Regulates Ca(2+) influx to myocytes by binding and phosphorylating the L-type Ca(2+) channel subunit beta-2 CACNB2. In addition to Ca(2+) channels, can target and regulate the cardiac sarcolemmal Na(+) channel Nav1.5/SCN5A and the K+ channel Kv4.3/KCND3, which contribute to arrhythmogenesis in heart failure. Phosphorylates phospholamban (PLN/PLB), an endogenous inhibitor of SERCA2A/ATP2A2, contributing to the enhancement of SR Ca(2+) uptake that may be important in frequency-dependent acceleration of relaxation (FDAR) and maintenance of contractile function during acidosis. May participate in the modulation of skeletal muscle function in response to exercise, by regulating SR Ca(2+) transport through phosphorylation of PLN/PLB and triadin, a ryanodine receptor-coupling factor. In response to interferon-gamma (IFN-gamma) stimulation, catalyzes phosphorylation of STAT1, stimulating the JAK-STAT signaling pathway. This chain is Calcium/calmodulin-dependent protein kinase type II subunit delta (CAMK2D), found in Oryctolagus cuniculus (Rabbit).